A 1441-amino-acid chain; its full sequence is uncharacterized protein (1441 aa).

Disordered stretches follow at residues 1–95, 150–204, 224–289, 401–477, 529–661, 680–760, 776–810, 849–899, 980–1118, 1161–1185, 1209–1321, 1348–1402, and 1421–1441; these read MGFL…EVIS, NGGI…QQQF, KPHQ…GEGE, HSNG…QLHQ, RHES…QPQQ, LNKD…KSQT, RKSS…HIQQ, QQQF…TQQL, RGGS…DNNN, KSLK…NENN, NIES…YRSY, GHNS…HIFF, and LKFN…SILE. The span at 19-38 shows a compositional bias: low complexity; it reads NDNSFDGGSSSYNNNNNNNN. Residues 39 to 56 are compositionally biased toward polar residues; it reads QPITYTPTAIRSPNNKTM. Composition is skewed to low complexity over residues 57-91, 153-187, 227-283, 416-445, 555-564, and 572-635; these read SQSQ…GNGN, ISQP…TTTP, QQQQ…SLQN, NNNN…GINN, GNTDGVNIDN, and NNNN…TNNT. Residues 636–645 show a composition bias toward polar residues; the sequence is ATPSVINGDS. Low complexity-rich tracts occupy residues 648-661 and 680-700; these read QEQP…QPQQ and LNKD…DDNN. Over residues 703-720 the composition is skewed to basic and acidic residues; that stretch reads SREEMENILKKSQQDSNK. Positions 729–751 are enriched in polar residues; it reads EDSNSGSPTFQDFQSSAAASNVS. Composition is skewed to low complexity over residues 780 to 810 and 849 to 880; these read DSLN…HIQQ and QQQF…NSGS. The segment covering 881–892 has biased composition (gly residues); sequence INGGSNSGGGGV. A compositionally biased stretch (polar residues) spans 981–994; it reads GGSTNRTTPPFLTP. Residues 995-1067 are compositionally biased toward low complexity; that stretch reads NTSQTNLSSL…NKQTANNTTN (73 aa). Polar residues predominate over residues 1068–1087; it reads DFSFDQNTDLRSSTNSLTIG. Positions 1088-1118 are enriched in low complexity; the sequence is SNSNFSSLKNSLNLENPENNNNPDKNVDNNN. Low complexity-rich tracts occupy residues 1225–1249 and 1257–1291; these read DNNN…SLRN and NISN…NNNE. Residues 1362-1373 are compositionally biased toward basic and acidic residues; it reads RHKDSIGDKEMD.

This is an uncharacterized protein from Dictyostelium discoideum (Social amoeba).